We begin with the raw amino-acid sequence, 389 residues long: MSKNIKILVIGAGVAGPAVCYWLRRFGFSPVLIEKYASIRKGGQALDVRGIATHIAREMGIYDQICEMRTRIERGRFVDSSGKVLHEEQGEKFGFRQDDEVEILRGDLVEILMKTIADVPCYFNQSIISIEQNADNVTVIFMDGRIEQYDLVIAADGIHSAIRRMIFEKNEYQLIHLGAYLSTFTIPNYLGLSHIDLECEANNKLVSINSDNNPEIARAGFMFRSQHLLNDIRDEQEQKQFLRDTFRDFGWETQNILNRMPESNDFYFDAITQVKMNSWTKGRIALVGDAGYCPSPLSGQGNNLAFVGAYILAGELKVANGNYTRAFTRYNALLRSFVDANQKFGVWVSESFLVKDEVSKEIAEERSNKILAMIKSISNGITLPQYESS.

FAD-binding positions include 12-15 (AGVA), 34-35 (EK), glutamine 44, arginine 105, tyrosine 267, and aspartate 289.

It belongs to the aromatic-ring hydroxylase family. Requires FAD as cofactor.

It carries out the reaction a tetracycline + NADPH + O2 + H(+) = a (1S,10aS)-3-(CONH2)-1-(Me2N)-3,3a,4,6-(HO)4-2,5-dioxo-1H,10aH,11H,11aH-cyclopenta[b]anthracene + CO + NADP(+) + H2O. The catalysed reaction is 7-chlorotetracycline + NADPH + O2 + H(+) = (1S,10S,10aS)-3-(CONH2)-9-Cl-1-(Me2N)-3,3a,4,10-(HO)4-10-Me-2,5-dioxo-1H,10aH,11H,11aH-cyclopenta[b]anthracen-6-olate + CO + NADP(+) + H2O. With respect to regulation, inhibited by anhydrotetracycline. In terms of biological role, an FAD-requiring monooxygenase active on tetracycline antibiotic and some of its derivatives, which leads to their inactivation. Expression in E.coli confers high resistance to tetracycline and oxytetracycline, does not confer resistance to minocycline or tigecycline. The reaction requires NADPH. Expression in L.pneumophila confers resistance to tetracycline. Degrades and confers resistance to tetracycline and chlortetracycline. This is Flavin-dependent monooxygenase (tet(56)) from Legionella longbeachae serogroup 1 (strain NSW150).